Here is a 616-residue protein sequence, read N- to C-terminus: Secretogranin-2 (616 aa).

The signal sequence occupies residues 1 to 27 (MAEAKTHWLGASLSLILLIFLLATAEA). Positions 28–30 (ASF) are excised as a propeptide. 2 disordered regions span residues 68-104 (QAHKEESSPDYNPYQGVSVPLQQKENSDLPESSRDSL) and 120-146 (AENEPQSSLKENKPYTLNSEKNFPMDM). Basic and acidic residues predominate over residues 92 to 104 (ENSDLPESSRDSL). Over residues 122-140 (NEPQSSLKENKPYTLNSEK) the composition is skewed to polar residues. A Sulfotyrosine modification is found at Tyr-150. 6 positions are modified to phosphoserine: Ser-173, Ser-267, Ser-431, Ser-531, Ser-554, and Ser-555. Residues 255 to 283 (KIESQTQEEVRDSKENIEKNEQINDEMKR) are compositionally biased toward basic and acidic residues. Positions 255 to 290 (KIESQTQEEVRDSKENIEKNEQINDEMKRSGQMGLQ) are disordered. A compositionally biased stretch (basic and acidic residues) spans 548 to 560 (ERLNQHSSQETDK). Residues 548–582 (ERLNQHSSQETDKLALVSKRLPVATPKSDDAPNRQ) form a disordered region.

The protein belongs to the chromogranin/secretogranin protein family. As to quaternary structure, interacts with Secretogranin III/SCG3.

Its subcellular location is the secreted. In terms of biological role, neuroendocrine protein of the granin family that regulates the biogenesis of secretory granules. In Sus scrofa (Pig), this protein is Secretogranin-2 (SCG2).